A 382-amino-acid chain; its full sequence is Galactokinase (382 aa).

Position 34 to 37 (34 to 37) interacts with substrate; the sequence is EHTD. ATP is bound at residue 124–130; it reads GAGLSSS. Residues serine 130 and glutamate 162 each coordinate Mg(2+). Aspartate 174 (proton acceptor) is an active-site residue. Tyrosine 223 contributes to the substrate binding site.

This sequence belongs to the GHMP kinase family. GalK subfamily.

It localises to the cytoplasm. The catalysed reaction is alpha-D-galactose + ATP = alpha-D-galactose 1-phosphate + ADP + H(+). Its pathway is carbohydrate metabolism; galactose metabolism. Functionally, catalyzes the transfer of the gamma-phosphate of ATP to D-galactose to form alpha-D-galactose-1-phosphate (Gal-1-P). The sequence is that of Galactokinase from Escherichia coli O1:K1 / APEC.